Reading from the N-terminus, the 136-residue chain is Protein NrdI (136 aa).

This sequence belongs to the NrdI family.

Functionally, probably involved in ribonucleotide reductase function. The polypeptide is Protein NrdI (Erwinia tasmaniensis (strain DSM 17950 / CFBP 7177 / CIP 109463 / NCPPB 4357 / Et1/99)).